Reading from the N-terminus, the 77-residue chain is Large ribosomal subunit protein uL29 (77 aa).

It belongs to the universal ribosomal protein uL29 family.

This Methanopyrus kandleri (strain AV19 / DSM 6324 / JCM 9639 / NBRC 100938) protein is Large ribosomal subunit protein uL29.